A 124-amino-acid polypeptide reads, in one-letter code: Small ribosomal subunit protein uS12 (124 aa).

Aspartate 89 is subject to 3-methylthioaspartic acid.

Belongs to the universal ribosomal protein uS12 family. As to quaternary structure, part of the 30S ribosomal subunit. Contacts proteins S8 and S17. May interact with IF1 in the 30S initiation complex.

Functionally, with S4 and S5 plays an important role in translational accuracy. In terms of biological role, interacts with and stabilizes bases of the 16S rRNA that are involved in tRNA selection in the A site and with the mRNA backbone. Located at the interface of the 30S and 50S subunits, it traverses the body of the 30S subunit contacting proteins on the other side and probably holding the rRNA structure together. The combined cluster of proteins S8, S12 and S17 appears to hold together the shoulder and platform of the 30S subunit. The sequence is that of Small ribosomal subunit protein uS12 from Arthrobacter sp. (strain FB24).